A 72-amino-acid chain; its full sequence is Translation initiation factor IF-1 (72 aa).

One can recognise an S1-like domain in the interval 1–72; that stretch reads MAKDDVIEID…DKGRITYRYK (72 aa).

This sequence belongs to the IF-1 family. In terms of assembly, component of the 30S ribosomal translation pre-initiation complex which assembles on the 30S ribosome in the order IF-2 and IF-3, IF-1 and N-formylmethionyl-tRNA(fMet); mRNA recruitment can occur at any time during PIC assembly.

The protein localises to the cytoplasm. One of the essential components for the initiation of protein synthesis. Stabilizes the binding of IF-2 and IF-3 on the 30S subunit to which N-formylmethionyl-tRNA(fMet) subsequently binds. Helps modulate mRNA selection, yielding the 30S pre-initiation complex (PIC). Upon addition of the 50S ribosomal subunit IF-1, IF-2 and IF-3 are released leaving the mature 70S translation initiation complex. This is Translation initiation factor IF-1 from Campylobacter curvus (strain 525.92).